Consider the following 462-residue polypeptide: ATP synthase subunit beta (462 aa).

152 to 159 (GGAGVGKT) contributes to the ATP binding site.

This sequence belongs to the ATPase alpha/beta chains family. As to quaternary structure, F-type ATPases have 2 components, CF(1) - the catalytic core - and CF(0) - the membrane proton channel. CF(1) has five subunits: alpha(3), beta(3), gamma(1), delta(1), epsilon(1). CF(0) has three main subunits: a(1), b(2) and c(9-12). The alpha and beta chains form an alternating ring which encloses part of the gamma chain. CF(1) is attached to CF(0) by a central stalk formed by the gamma and epsilon chains, while a peripheral stalk is formed by the delta and b chains.

It is found in the cell inner membrane. The enzyme catalyses ATP + H2O + 4 H(+)(in) = ADP + phosphate + 5 H(+)(out). In terms of biological role, produces ATP from ADP in the presence of a proton gradient across the membrane. The catalytic sites are hosted primarily by the beta subunits. This chain is ATP synthase subunit beta, found in Blochmanniella pennsylvanica (strain BPEN).